Here is a 139-residue protein sequence, read N- to C-terminus: Large-conductance mechanosensitive channel (139 aa).

2 consecutive transmembrane segments (helical) span residues 9–29 (AFAV…GAAF) and 79–99 (IQTV…VKAI).

The protein belongs to the MscL family. In terms of assembly, homopentamer.

Its subcellular location is the cell inner membrane. Channel that opens in response to stretch forces in the membrane lipid bilayer. May participate in the regulation of osmotic pressure changes within the cell. The chain is Large-conductance mechanosensitive channel from Pseudomonas putida (strain ATCC 47054 / DSM 6125 / CFBP 8728 / NCIMB 11950 / KT2440).